The following is a 211-amino-acid chain: Ribosomal RNA small subunit methyltransferase G (211 aa).

S-adenosyl-L-methionine contacts are provided by residues Gly73, 126-127 (IE), and Arg142.

The protein belongs to the methyltransferase superfamily. RNA methyltransferase RsmG family.

The protein localises to the cytoplasm. The catalysed reaction is guanosine(527) in 16S rRNA + S-adenosyl-L-methionine = N(7)-methylguanosine(527) in 16S rRNA + S-adenosyl-L-homocysteine. Functionally, specifically methylates the N7 position of guanine in position 527 of 16S rRNA. The sequence is that of Ribosomal RNA small subunit methyltransferase G from Methylorubrum extorquens (strain PA1) (Methylobacterium extorquens).